The chain runs to 225 residues: Protein-L-isoaspartate O-methyltransferase (225 aa).

S75 is a catalytic residue.

It belongs to the methyltransferase superfamily. L-isoaspartyl/D-aspartyl protein methyltransferase family.

It localises to the cytoplasm. It catalyses the reaction [protein]-L-isoaspartate + S-adenosyl-L-methionine = [protein]-L-isoaspartate alpha-methyl ester + S-adenosyl-L-homocysteine. Its function is as follows. Catalyzes the methyl esterification of L-isoaspartyl residues in peptides and proteins that result from spontaneous decomposition of normal L-aspartyl and L-asparaginyl residues. It plays a role in the repair and/or degradation of damaged proteins. This is Protein-L-isoaspartate O-methyltransferase from Xylella fastidiosa (strain M23).